The chain runs to 173 residues: Translocon-associated protein subunit delta (173 aa).

The N-terminal stretch at 1-23 (MAAMASLGALALLLLSSLSRCSA) is a signal peptide. Topologically, residues 24–144 (EACLEPQITP…SVDHRGTWNG (121 aa)) are lumenal. A disulfide bridge links Cys-26 with Cys-57. A Glycyl lysine isopeptide (Lys-Gly) (interchain with G-Cter in ubiquitin) cross-link involves residue Lys-73. A helical membrane pass occupies residues 145 to 165 (PWVSTEVLAAAIGLVIYYLAF). Over 166–173 (SAKSHIQA) the chain is Cytoplasmic.

The protein belongs to the TRAP-delta family. In terms of assembly, heterotetramer of TRAP-alpha, TRAP-beta, TRAP-delta and TRAP-gamma.

It is found in the endoplasmic reticulum membrane. In terms of biological role, TRAP proteins are part of a complex whose function is to bind calcium to the ER membrane and thereby regulate the retention of ER resident proteins. In Homo sapiens (Human), this protein is Translocon-associated protein subunit delta (SSR4).